A 382-amino-acid chain; its full sequence is Lactosylceramide 1,3-N-acetyl-beta-D-glucosaminyltransferase B (382 aa).

Over 1–13 (MAVLKMPRFKKYH) the chain is Cytoplasmic. A helical; Signal-anchor for type II membrane protein membrane pass occupies residues 14-30 (LRLMITCFSTLLLMTYW). Residues 31 to 382 (EKIDNCVVTH…CKAAFFEEDT (352 aa)) lie on the Lumenal side of the membrane. Asn-57, Asn-112, Asn-167, and Asn-276 each carry an N-linked (GlcNAc...) asparagine glycan.

It belongs to the glycosyltransferase 31 family.

It is found in the golgi apparatus membrane. It catalyses the reaction a beta-D-Gal-(1-&gt;4)-beta-D-Glc-(1&lt;-&gt;1)-Cer(d18:1(4E)) + UDP-N-acetyl-alpha-D-glucosamine = a beta-D-GlcNAc-(1-&gt;3)-beta-D-Gal-(1-&gt;4)-beta-D-Glc-(1&lt;-&gt;1)-Cer(d18:1(4E)) + UDP + H(+). The enzyme catalyses a neolactoside nLc4Cer(d18:1(4E)) + UDP-N-acetyl-alpha-D-glucosamine = a neolactoside IV(3)-beta-GlcNAc-nLc4Cer(d18:1(4E)) + UDP + H(+). The protein operates within protein modification; protein glycosylation. Its function is as follows. Beta-1,3-N-acetylglucosaminyltransferase that plays a key role in the synthesis of lacto- or neolacto-series carbohydrate chains on glycolipids. This Danio rerio (Zebrafish) protein is Lactosylceramide 1,3-N-acetyl-beta-D-glucosaminyltransferase B (b3gnt5b).